The following is an 873-amino-acid chain: MHEQYQPLEIETQAQNYWKEHQSFLVRELPDKEKFYCLSMFPYPSGKLHMGHVRNYTIGDVISRYHRMQGRNVLQPMGWDAFGMPAENAAMKNNVAPAAWTYDNIAYMKSQLDSLGLAIDWSREVTTCKPDYYRWEQWLFTRLFEKGVIYRKNGTVNWDPVDQTVLANEQVIDGRGWRSGALIEKREIPMYYFKITAYAEELLESLDNLPGWPEQVKTMQRNWIGKSRGMEIGFPYDQASIGHAGQLKVFTTRPDTLMGATYVAVAAEHPLATQAAQNDPQLQAFIDECKRGGVAEADIATQEKKGMATSLFVEHPLTGDKLPVWVANYVLMNYGEGAVMAVPGHDERDFEFANKYGLPIRQVIAKVEGDNDFESSVWKEWYGAKDESVLTVNSGKYDNLGYQAAFDAIGADLEAKGLGQARTQFRLRDWGISRQRYWGCPIPIIHCEACGDVPVPADQLPVVLPEDVVPDGSGSPLAKMPEFYECNCPKCGQPAKRETDTMDTFVESSWYFARYACPQFEGGMLDRKAADYWLPVDQYIGGIEHAILHLLYARFFHKLMRDEGLVGSDEPFKNLLTQGMVVADTYYRTTANGGKDWFNPADVEVERDAKAKVVGARLKSDGQPVEIGGTEKMSKSKNNGVDPQSMIDQYGADTCRLFMMFASPPDMSLEWSDAGVEGANRFLRRVWRLAHAHVSAGLPGALDVATLSDAQKQVRRAIHLAIRQASQDVGQHHKFNTAIAAVMTLMNVLEKAPNQDAQDRALIQEGLETVVLLLAPITPHICHVLWGQLGHAEAVIDARWPSVDESALVQDTLQLVVQVNGKLRGHIDVAASASREDVEAAARANENVLRFTEGLSIRKVIVVPGKLVNIVAN.

The 'HIGH' region signature appears at 42 to 52; that stretch reads PYPSGKLHMGH. The interval 624–643 is disordered; sequence PVEIGGTEKMSKSKNNGVDP. The 'KMSKS' region signature appears at 632–636; that stretch reads KMSKS. Lys635 is a binding site for ATP.

This sequence belongs to the class-I aminoacyl-tRNA synthetase family.

The protein localises to the cytoplasm. It carries out the reaction tRNA(Leu) + L-leucine + ATP = L-leucyl-tRNA(Leu) + AMP + diphosphate. This is Leucine--tRNA ligase from Pseudomonas aeruginosa (strain LESB58).